A 205-amino-acid polypeptide reads, in one-letter code: uncharacterized protein (205 aa).

5 helical membrane passes run 5-25, 41-61, 68-88, 117-137, and 147-167; these read VWLA…SGTV, GAII…GIGI, SALA…WLGI, LINL…PQFI, and FLVL…GYTA.

It belongs to the Rht family.

It is found in the cell inner membrane. Involved in positive regulation of motility and negative regulation of biofilm formation. This is an uncharacterized protein from Vibrio cholerae serotype O1 (strain ATCC 39315 / El Tor Inaba N16961).